Here is a 536-residue protein sequence, read N- to C-terminus: GPI alpha-1,2-mannosyltransferase 3 (536 aa).

A glycan (N-linked (GlcNAc...) asparagine) is linked at Asn15. 2 helical membrane-spanning segments follow: residues 40-60 (IFGINITVFIVLVRLLNCVLV) and 118-138 (VYLLVFVPRVFQALLAAYADV). Asn176 carries an N-linked (GlcNAc...) asparagine glycan. 6 helical membrane-spanning segments follow: residues 206–226 (LVSLAVVIRPTALIVWFPLIF), 243–263 (YFPIGVLALGVSTLIDSFFYG), 297–317 (GLPVVIGPHLPLVLHGCLLST), 322–342 (ILLLTIIWTTAVYSLLAHKEF), 344–364 (FIYPVLPFCMIFCGLSLAKLQ), and 369–389 (AAAGALLLFNLCPALYTGLVH). Asn467 carries an N-linked (GlcNAc...) asparagine glycan.

This sequence belongs to the glycosyltransferase 22 family. PIGB subfamily.

The protein localises to the endoplasmic reticulum membrane. Its pathway is glycolipid biosynthesis; glycosylphosphatidylinositol-anchor biosynthesis. Alpha-1,2-mannosyltransferase that catalyzes the transfer of the third mannose, via an alpha-1,2 bond, from a dolichol-phosphate-mannose (Dol-P-Man) to an alpha-D-Man-(1-&gt;6)-2-PEtn-alpha-D-Man-(1-&gt;4)-alpha-D-GlcN-(1-&gt;6)-(1-radyl,2-acyl-sn-glycero-3-phospho)-2-acyl-inositol intermediate to generate an alpha-D-Man-(1-&gt;2)-alpha-D-Man-(1-&gt;6)-2-PEtn-alpha-D-Man-(1-&gt;4)-alpha-D-GlcN-(1-&gt;6)-(1-radyl,2-acyl-sn-glycero-3-phospho)-2-acyl-inositol (also termed H6) and participates in the nineth step of the glycosylphosphatidylinositol-anchor biosynthesis. May also add the third mannose to an alpha-D-Man-(1-&gt;6)-alpha-D-Man-(1-&gt;4)-alpha-D-GlcN-(1-&gt;6)-(1-radyl,2-acyl-sn-glycero-3-phospho)-2-acyl-inositol (also termed H3) intermediate generating an alpha-D-Man-(1-&gt;2)-alpha-D-Man-(1-&gt;6)-alpha-D-Man-(1-&gt;4)-alpha-D-GlcN-(1-&gt;6)-(1-radyl,2-acyl-sn-glycero-3-phospho)-2-acyl-inositol (also termed H4). This chain is GPI alpha-1,2-mannosyltransferase 3, found in Danio rerio (Zebrafish).